Here is a 123-residue protein sequence, read N- to C-terminus: WAP four-disulfide core domain protein 5 (123 aa).

Residues 1–24 (MRIQSLLLLGALLAVGSQLPAVFG) form the signal peptide. 2 consecutive WAP domains span residues 27–73 (KGEK…CVPR) and 74–121 (VSVK…RDPA). 8 cysteine pairs are disulfide-bonded: Cys34/Cys62, Cys41/Cys66, Cys49/Cys61, Cys55/Cys70, Cys81/Cys109, Cys88/Cys113, Cys96/Cys108, and Cys102/Cys117.

The protein localises to the secreted. In terms of biological role, putative acid-stable proteinase inhibitor. In Papio anubis (Olive baboon), this protein is WAP four-disulfide core domain protein 5 (WFDC5).